The primary structure comprises 323 residues: RNA polymerase II holoenzyme cyclin-like subunit (323 aa).

The Cyclin N-terminal domain maps to 45 to 176 (DSKQNGIEQS…LLEELESYLI (132 aa)).

Belongs to the cyclin family. Cyclin C subfamily. Component of the SRB8-11 complex which consists of SRB8, SSN2/SRB9, SSN3/SRB10 and SSN8/SRB11. The SRB8-11 complex associates with the Mediator complex. The SSN3/SRB10 and SSN8/SRB11 kinase-cyclin pair also associate with the RNA polymerase II holoenzyme. Interacts with ASK10.

It localises to the nucleus. Component of the SRB8-11 complex. The SRB8-11 complex is a regulatory module of the Mediator complex which is itself involved in regulation of basal and activated RNA polymerase II-dependent transcription. The SRB8-11 complex may be involved in the transcriptional repression of a subset of genes regulated by Mediator. It may inhibit the association of the Mediator complex with RNA polymerase II to form the holoenzyme complex. The SRB8-11 complex phosphorylates the C-terminal domain (CTD) of the largest subunit of RNA polymerase II RPB1 at serines 2 and 5. The SSN3/SRB10 and SSN8/SRB11 kinase-cyclin pair may also positively and negatively regulate numerous transcriptional activators in response to changes in nutritional and physiological conditions. The chain is RNA polymerase II holoenzyme cyclin-like subunit (SSN8) from Saccharomyces cerevisiae (strain ATCC 204508 / S288c) (Baker's yeast).